We begin with the raw amino-acid sequence, 364 residues long: tRNA-specific 2-thiouridylase MnmA 2 (364 aa).

ATP-binding positions include 10–17 and M36; that span reads GMSGGVDS. Catalysis depends on C106, which acts as the Nucleophile. C106 and C204 are oxidised to a cystine. An ATP-binding site is contributed by G130. The tract at residues 154–156 is interaction with tRNA; that stretch reads KDQ. C204 functions as the Cysteine persulfide intermediate in the catalytic mechanism. Residues 310 to 311 form an interaction with tRNA region; sequence RY.

It belongs to the MnmA/TRMU family.

The protein resides in the cytoplasm. The enzyme catalyses S-sulfanyl-L-cysteinyl-[protein] + uridine(34) in tRNA + AH2 + ATP = 2-thiouridine(34) in tRNA + L-cysteinyl-[protein] + A + AMP + diphosphate + H(+). Functionally, catalyzes the 2-thiolation of uridine at the wobble position (U34) of tRNA, leading to the formation of s(2)U34. This is tRNA-specific 2-thiouridylase MnmA 2 from Caldanaerobacter subterraneus subsp. tengcongensis (strain DSM 15242 / JCM 11007 / NBRC 100824 / MB4) (Thermoanaerobacter tengcongensis).